A 249-amino-acid chain; its full sequence is (2S)-[(R)-hydroxy(phenyl)methyl]succinyl-CoA dehydrogenase subunit BbsC (249 aa).

Belongs to the short-chain dehydrogenases/reductases (SDR) family. Heterotetramer composed of 2 inactive BbsC subunits and 2 active BbsD subunits.

It functions in the pathway xenobiotic degradation; toluene degradation. Involved in an anaerobic toluene degradation pathway. Catalytically inactive subunit, which is probably required for the structural and/or regulatory integrity of the catalytic subunit BbsD. This subunit cannot bind NAD(+) or substrate. The sequence is that of (2S)-[(R)-hydroxy(phenyl)methyl]succinyl-CoA dehydrogenase subunit BbsC from Thauera aromatica.